Here is a 431-residue protein sequence, read N- to C-terminus: Glucose-1-phosphate adenylyltransferase (431 aa).

Position 39 (K39) interacts with beta-D-fructose 1,6-bisphosphate. Positions 40, 46, and 52 each coordinate AMP. Residue Y114 coordinates alpha-D-glucose 1-phosphate. Position 130 (R130) interacts with AMP. Alpha-D-glucose 1-phosphate is bound by residues G179, E194 to K195, and S212. E370 and R386 together coordinate AMP. Residues R419–R423 and Q429–R431 contribute to the beta-D-fructose 1,6-bisphosphate site.

The protein belongs to the bacterial/plant glucose-1-phosphate adenylyltransferase family. Homotetramer.

It carries out the reaction alpha-D-glucose 1-phosphate + ATP + H(+) = ADP-alpha-D-glucose + diphosphate. It participates in glycan biosynthesis; glycogen biosynthesis. Its activity is regulated as follows. Allosterically activated by fructose-1,6-bisphosphate (F16BP) and inhibited by AMP. Involved in the biosynthesis of ADP-glucose, a building block required for the elongation reactions to produce glycogen. Catalyzes the reaction between ATP and alpha-D-glucose 1-phosphate (G1P) to produce pyrophosphate and ADP-Glc. This Salmonella paratyphi A (strain ATCC 9150 / SARB42) protein is Glucose-1-phosphate adenylyltransferase.